Here is a 393-residue protein sequence, read N- to C-terminus: Telomeric repeat-binding factor 2-interacting protein 1 (393 aa).

Ala2 bears the N-acetylalanine mark. A phosphoserine mark is found at Ser36 and Ser43. The 24-residue stretch at 78 to 101 (FISTQYILDCVDRNEKLDLEAYRL) folds into the BRCT domain. The tract at residues 104–132 (TEQASDPKPGASTEGSTEPEPQPLTGRIA) is disordered. Lys111 participates in a covalent cross-link: Glycyl lysine isopeptide (Lys-Gly) (interchain with G-Cter in SUMO2). Residues 125–185 (QPLTGRIAYT…SLKDRYLKHL (61 aa)) form the Myb-like domain. Ser151 and Ser153 each carry phosphoserine. Lys191 participates in a covalent cross-link: Glycyl lysine isopeptide (Lys-Gly) (interchain with G-Cter in SUMO2). Positions 193–304 (LLGNAPVSPS…EEEPKVSTQE (112 aa)) are disordered. 2 positions are modified to phosphoserine: Ser200 and Ser203. Residues Lys205, Lys209, and Lys237 each participate in a glycyl lysine isopeptide (Lys-Gly) (interchain with G-Cter in SUMO2) cross-link. Positions 223-252 (QNKRAPDLPEEECVKGEIKENGEADNKLFE) are enriched in basic and acidic residues. The span at 282-297 (TPEEDSETQPDEEEEE) shows a compositional bias: acidic residues. Lys366 participates in a covalent cross-link: Glycyl lysine isopeptide (Lys-Gly) (interchain with G-Cter in SUMO2). The Nuclear localization signal signature appears at 377–393 (KKFGAQNVARRIEFRKK).

This sequence belongs to the RAP1 family. Homodimer. Component of the shelterin complex (telosome) composed of TERF1, TERF2, TINF2, TERF2IP ACD and POT1. Binds to TERF2 (but not TERF1) with its C-terminus. Interacts with SLX4/BTBD12. Interacts with TERF2; the interaction is direct. Does not interact with TERF1. Associates with the I-kappa-B-kinase (IKK) core complex, composed of CHUK, IKBKB and IKBKG.

Its subcellular location is the nucleus. The protein localises to the cytoplasm. It localises to the chromosome. It is found in the telomere. Acts both as a regulator of telomere function and as a transcription regulator. Involved in the regulation of telomere length and protection as a component of the shelterin complex (telosome). In contrast to other components of the shelterin complex, it is dispensible for telomere capping and does not participate in the protection of telomeres against non-homologous end-joining (NHEJ)-mediated repair. Instead, it is required to negatively regulate telomere recombination and is essential for repressing homology-directed repair (HDR), which can affect telomere length. Does not bind DNA directly: recruited to telomeric double-stranded 5'-TTAGGG-3' repeats via its interaction with TERF2. Independently of its function in telomeres, also acts as a transcription regulator: recruited to extratelomeric 5'-TTAGGG-3' sites via its association with TERF2 or other factors, and regulates gene expression. When cytoplasmic, associates with the I-kappa-B-kinase (IKK) complex and acts as a regulator of the NF-kappa-B signaling by promoting IKK-mediated phosphorylation of RELA/p65, leading to activate expression of NF-kappa-B target genes. The chain is Telomeric repeat-binding factor 2-interacting protein 1 (Terf2ip) from Mus musculus (Mouse).